The primary structure comprises 478 residues: UDP-N-acetylmuramate--L-alanine ligase (478 aa).

Position 126-132 (126-132) interacts with ATP; that stretch reads GTHGKTT.

Belongs to the MurCDEF family.

It is found in the cytoplasm. The enzyme catalyses UDP-N-acetyl-alpha-D-muramate + L-alanine + ATP = UDP-N-acetyl-alpha-D-muramoyl-L-alanine + ADP + phosphate + H(+). It functions in the pathway cell wall biogenesis; peptidoglycan biosynthesis. Its function is as follows. Cell wall formation. This chain is UDP-N-acetylmuramate--L-alanine ligase, found in Synechococcus sp. (strain JA-2-3B'a(2-13)) (Cyanobacteria bacterium Yellowstone B-Prime).